A 409-amino-acid chain; its full sequence is Na(+)-translocating NADH-quinone reductase subunit F (409 aa).

Residues Phe5–Ile25 form a helical membrane-spanning segment. A 2Fe-2S ferredoxin-type domain is found at Gly34–Val128. Positions 71, 77, 80, and 112 each coordinate [2Fe-2S] cluster. Residues Val131–Lys271 form the FAD-binding FR-type domain.

The protein belongs to the NqrF family. As to quaternary structure, composed of six subunits; NqrA, NqrB, NqrC, NqrD, NqrE and NqrF. It depends on [2Fe-2S] cluster as a cofactor. FAD serves as cofactor.

The protein localises to the cell inner membrane. The catalysed reaction is a ubiquinone + n Na(+)(in) + NADH + H(+) = a ubiquinol + n Na(+)(out) + NAD(+). NQR complex catalyzes the reduction of ubiquinone-1 to ubiquinol by two successive reactions, coupled with the transport of Na(+) ions from the cytoplasm to the periplasm. The first step is catalyzed by NqrF, which accepts electrons from NADH and reduces ubiquinone-1 to ubisemiquinone by a one-electron transfer pathway. The polypeptide is Na(+)-translocating NADH-quinone reductase subunit F (Mannheimia succiniciproducens (strain KCTC 0769BP / MBEL55E)).